The primary structure comprises 333 residues: Ornithine carbamoyltransferase (333 aa).

Carbamoyl phosphate is bound by residues 56-59, Arg-107, and 134-137; these read STRT and HPTQ. Residues Asn-167, Asp-231, and 235–236 each bind L-ornithine; that span reads SM. Carbamoyl phosphate contacts are provided by residues 273-274 and Arg-318; that span reads CL.

It belongs to the aspartate/ornithine carbamoyltransferase superfamily. OTCase family.

It is found in the cytoplasm. It catalyses the reaction carbamoyl phosphate + L-ornithine = L-citrulline + phosphate + H(+). It participates in amino-acid degradation; L-arginine degradation via ADI pathway; carbamoyl phosphate from L-arginine: step 2/2. In terms of biological role, reversibly catalyzes the transfer of the carbamoyl group from carbamoyl phosphate (CP) to the N(epsilon) atom of ornithine (ORN) to produce L-citrulline. The chain is Ornithine carbamoyltransferase from Clostridium botulinum (strain Langeland / NCTC 10281 / Type F).